Here is a 327-residue protein sequence, read N- to C-terminus: ATP-dependent 6-phosphofructokinase (327 aa).

Residues Gly-11, 72 to 73, and 102 to 105 each bind ATP; these read RS and GDGS. A Mg(2+)-binding site is contributed by Asp-103. 127–129 is a substrate binding site; it reads TID. Asp-129 serves as the catalytic Proton acceptor. Arg-156 provides a ligand contact to ADP. Substrate-binding positions include Arg-164 and 171–173; that span reads MGR. 187 to 189 is a binding site for ADP; it reads GAE. Substrate-binding positions include Glu-224, Arg-245, and 251–254; that span reads HIQR.

The protein belongs to the phosphofructokinase type A (PFKA) family. ATP-dependent PFK group I subfamily. Prokaryotic clade 'B1' sub-subfamily. In terms of assembly, homotetramer. Requires Mg(2+) as cofactor.

The protein resides in the cytoplasm. The enzyme catalyses beta-D-fructose 6-phosphate + ATP = beta-D-fructose 1,6-bisphosphate + ADP + H(+). It participates in carbohydrate degradation; glycolysis; D-glyceraldehyde 3-phosphate and glycerone phosphate from D-glucose: step 3/4. Its activity is regulated as follows. Allosterically activated by ADP and other diphosphonucleosides, and allosterically inhibited by phosphoenolpyruvate. In terms of biological role, catalyzes the phosphorylation of D-fructose 6-phosphate to fructose 1,6-bisphosphate by ATP, the first committing step of glycolysis. The protein is ATP-dependent 6-phosphofructokinase of Sulfurovum sp. (strain NBC37-1).